The chain runs to 567 residues: Protein NRT1/ PTR FAMILY 4.5 (567 aa).

12 consecutive transmembrane segments (helical) span residues G30–A50, S70–A92, F99–I118, A147–L167, F189–V209, W219–S239, I326–Q346, V374–F394, I411–K431, L448–F468, S491–V511, and L535–A555.

This sequence belongs to the major facilitator superfamily. Proton-dependent oligopeptide transporter (POT/PTR) (TC 2.A.17) family. In terms of tissue distribution, expressed in flowers and siliques.

It is found in the membrane. Functionally, involved in abscisic acid transport. The sequence is that of Protein NRT1/ PTR FAMILY 4.5 (NPF4.5) from Arabidopsis thaliana (Mouse-ear cress).